A 348-amino-acid polypeptide reads, in one-letter code: Dihydroorotase (348 aa).

Zn(2+) is bound by residues His14 and His16. Substrate contacts are provided by residues 16 to 18 and Asn42; that span reads HLR. Lys100, His137, and His175 together coordinate Zn(2+). Residue Lys100 is modified to N6-carboxylysine. His137 lines the substrate pocket. Leu220 contacts substrate. Zn(2+) is bound at residue Asp248. Asp248 is a catalytic residue. Residues His252 and Ala264 each coordinate substrate.

This sequence belongs to the metallo-dependent hydrolases superfamily. DHOase family. Class II DHOase subfamily. Homodimer. Zn(2+) serves as cofactor.

The catalysed reaction is (S)-dihydroorotate + H2O = N-carbamoyl-L-aspartate + H(+). It functions in the pathway pyrimidine metabolism; UMP biosynthesis via de novo pathway; (S)-dihydroorotate from bicarbonate: step 3/3. Its function is as follows. Catalyzes the reversible cyclization of carbamoyl aspartate to dihydroorotate. The polypeptide is Dihydroorotase (Pseudomonas putida (strain W619)).